The sequence spans 175 residues: tRNA (cytidine(56)-2'-O)-methyltransferase (175 aa).

Leu82 is an S-adenosyl-L-methionine binding site.

This sequence belongs to the aTrm56 family. Homodimer.

Its subcellular location is the cytoplasm. It catalyses the reaction cytidine(56) in tRNA + S-adenosyl-L-methionine = 2'-O-methylcytidine(56) in tRNA + S-adenosyl-L-homocysteine + H(+). Specifically catalyzes the AdoMet-dependent 2'-O-ribose methylation of cytidine at position 56 in tRNAs. This Cenarchaeum symbiosum (strain A) protein is tRNA (cytidine(56)-2'-O)-methyltransferase.